The sequence spans 115 residues: NAD(P)H-quinone oxidoreductase subunit M (115 aa).

It belongs to the complex I NdhM subunit family. In terms of assembly, NDH-1 can be composed of about 15 different subunits; different subcomplexes with different compositions have been identified which probably have different functions.

The protein localises to the cellular thylakoid membrane. The catalysed reaction is a plastoquinone + NADH + (n+1) H(+)(in) = a plastoquinol + NAD(+) + n H(+)(out). It carries out the reaction a plastoquinone + NADPH + (n+1) H(+)(in) = a plastoquinol + NADP(+) + n H(+)(out). In terms of biological role, NDH-1 shuttles electrons from an unknown electron donor, via FMN and iron-sulfur (Fe-S) centers, to quinones in the respiratory and/or the photosynthetic chain. The immediate electron acceptor for the enzyme in this species is believed to be plastoquinone. Couples the redox reaction to proton translocation, and thus conserves the redox energy in a proton gradient. Cyanobacterial NDH-1 also plays a role in inorganic carbon-concentration. The chain is NAD(P)H-quinone oxidoreductase subunit M from Prochlorococcus marinus (strain MIT 9313).